Reading from the N-terminus, the 145-residue chain is Large ribosomal subunit protein uL15 (145 aa).

Residues 23-51 are disordered; sequence IGSGWGKTGGRGHKGQKSRSGGKIRKSFE. Over residues 32–47 the composition is skewed to basic residues; sequence GRGHKGQKSRSGGKIR.

This sequence belongs to the universal ribosomal protein uL15 family. As to quaternary structure, part of the 50S ribosomal subunit.

In terms of biological role, binds to the 23S rRNA. The sequence is that of Large ribosomal subunit protein uL15 from Buchnera aphidicola subsp. Cinara cedri (strain Cc).